The primary structure comprises 309 residues: Methionyl-tRNA formyltransferase (309 aa).

109-112 is a binding site for (6S)-5,6,7,8-tetrahydrofolate; sequence SLLP.

This sequence belongs to the Fmt family.

The enzyme catalyses L-methionyl-tRNA(fMet) + (6R)-10-formyltetrahydrofolate = N-formyl-L-methionyl-tRNA(fMet) + (6S)-5,6,7,8-tetrahydrofolate + H(+). Functionally, attaches a formyl group to the free amino group of methionyl-tRNA(fMet). The formyl group appears to play a dual role in the initiator identity of N-formylmethionyl-tRNA by promoting its recognition by IF2 and preventing the misappropriation of this tRNA by the elongation apparatus. In Thiobacillus denitrificans (strain ATCC 25259 / T1), this protein is Methionyl-tRNA formyltransferase.